Reading from the N-terminus, the 115-residue chain is Divalent-cation tolerance protein CutA (115 aa).

Cu cation-binding residues include C19, H86, and H87.

It belongs to the CutA family. In terms of assembly, homotrimer. Cu cation is required as a cofactor.

Its subcellular location is the cytoplasm. Involved in resistance toward heavy metals. The sequence is that of Divalent-cation tolerance protein CutA from Citrobacter koseri (strain ATCC BAA-895 / CDC 4225-83 / SGSC4696).